The primary structure comprises 316 residues: Solute carrier family 25 member 32 (316 aa).

Solcar repeat units lie at residues 20-109 (HVRY…IKSY), 118-209 (LEPL…LKLK), and 222-306 (LSTA…VSHF). The next 6 membrane-spanning stretches (helical) occupy residues 26 to 46 (LVAG…LDLV), 89 to 106 (VWGA…YNAI), 123 to 143 (YLVS…PLWV), 185 to 203 (GFVP…FMAY), 227 to 243 (YISV…AATY), and 281 to 300 (GIAP…FVVY).

It belongs to the mitochondrial carrier (TC 2.A.29) family.

It is found in the mitochondrion inner membrane. It catalyses the reaction FAD(in) = FAD(out). Functionally, facilitates flavin adenine dinucleotide (FAD) translocation across the mitochondrial inner membrane into the mitochondrial matrix where it acts as a redox cofactor to assist flavoenzyme activities in fundamental metabolic processes including fatty acid beta-oxidation, amino acid and choline metabolism as well as mitochondrial electron transportation. In particular, provides FAD to DLD dehydrogenase of the glycine cleavage system, part of mitochondrial one-carbon metabolic pathway involved in neural tube closure in early embryogenesis. The protein is Solute carrier family 25 member 32 of Mus musculus (Mouse).